Here is a 568-residue protein sequence, read N- to C-terminus: 2-succinyl-5-enolpyruvyl-6-hydroxy-3-cyclohexene-1-carboxylate synthase (568 aa).

It belongs to the TPP enzyme family. MenD subfamily. Homodimer. Mg(2+) serves as cofactor. The cofactor is Mn(2+). Requires thiamine diphosphate as cofactor.

The catalysed reaction is isochorismate + 2-oxoglutarate + H(+) = 5-enolpyruvoyl-6-hydroxy-2-succinyl-cyclohex-3-ene-1-carboxylate + CO2. It functions in the pathway quinol/quinone metabolism; 1,4-dihydroxy-2-naphthoate biosynthesis; 1,4-dihydroxy-2-naphthoate from chorismate: step 2/7. The protein operates within quinol/quinone metabolism; menaquinone biosynthesis. Functionally, catalyzes the thiamine diphosphate-dependent decarboxylation of 2-oxoglutarate and the subsequent addition of the resulting succinic semialdehyde-thiamine pyrophosphate anion to isochorismate to yield 2-succinyl-5-enolpyruvyl-6-hydroxy-3-cyclohexene-1-carboxylate (SEPHCHC). The polypeptide is 2-succinyl-5-enolpyruvyl-6-hydroxy-3-cyclohexene-1-carboxylate synthase (Histophilus somni (strain 2336) (Haemophilus somnus)).